Consider the following 466-residue polypeptide: MIKVYNTLNKKKEEFIPLTPGEVKMYVCGPTVYNFFHIGNGRTFIVFDTIRRYFEYRGFKVDFVQNFTDIDDKMIKKANEEGTTVKKIGDTYIKEYYQDADALNIERATVNPRATEFIGEIIKFVKGLVDKGYAYEVDGDVYFSTKKFEGYGKLSGQNIEDLQSGARISVDERKKDPMDFAIWKAQKPGEPAWNSPWGMGRPGWHIECSCMAKKLLGETIDIHAGGSDLKFPHHENEIAQSEALTGEPFARYWLHSAFVNVNNEKMSKSLNNFFTAREILERYDADVIRFLMLSAHYRQQLNFSEDLLESAKASVERIYNAIGNLENLIDEVSREEMNEEEKAYLESLNKYKEKYIEKMDDDFNTADAITAIFDLIKDTNTNITIDSSKELAQKALELIRELGAPLGMFQKSTKGNLEEEIEALIAKRQQARKDRDFTLADKIRDELKDRGIVLEDTPQGVRWKMI.

Cys-28 contributes to the Zn(2+) binding site. The short motif at 30–40 (PTVYNFFHIGN) is the 'HIGH' region element. Cys-208, His-233, and Glu-237 together coordinate Zn(2+). The 'KMSKS' region motif lies at 265–269 (KMSKS). Lys-268 is a binding site for ATP.

It belongs to the class-I aminoacyl-tRNA synthetase family. Monomer. It depends on Zn(2+) as a cofactor.

The protein resides in the cytoplasm. It carries out the reaction tRNA(Cys) + L-cysteine + ATP = L-cysteinyl-tRNA(Cys) + AMP + diphosphate. The chain is Cysteine--tRNA ligase from Clostridium perfringens (strain ATCC 13124 / DSM 756 / JCM 1290 / NCIMB 6125 / NCTC 8237 / Type A).